The sequence spans 69 residues: Light-harvesting protein B-1015 alpha chain (69 aa).

Over 2-20 (ATEYRTASWKLWLILDPRR) the chain is Cytoplasmic. A helical membrane pass occupies residues 21–41 (VLTALFVYLTVIALLIHFGLL). H37 serves as a coordination point for a bacteriochlorophyll. Residues 42 to 59 (STDRLNWWEFQRGLPKAA) are Periplasmic-facing. Residues 60 to 69 (SLVVVPPAVG) constitute a propeptide that is removed on maturation.

It belongs to the antenna complex alpha subunit family. As to quaternary structure, the core complex is formed by different alpha and beta chains, binding bacteriochlorophyll molecules, and arranged most probably in tetrameric structures disposed around the reaction center. The non-pigmented gamma chains may constitute additional components.

It localises to the cell inner membrane. Its function is as follows. Antenna complexes are light-harvesting systems, which transfer the excitation energy to the reaction centers. In Blastochloris viridis (Rhodopseudomonas viridis), this protein is Light-harvesting protein B-1015 alpha chain (pufA).